The following is a 554-amino-acid chain: Urocanate hydratase (554 aa).

NAD(+) is bound by residues 51-52 (GG), Q129, 175-177 (GMG), E195, 241-242 (NA), 262-266 (QTSAH), 272-273 (YL), and Y321. Residue C409 is part of the active site. G491 is an NAD(+) binding site.

Belongs to the urocanase family. It depends on NAD(+) as a cofactor.

Its subcellular location is the cytoplasm. It catalyses the reaction 4-imidazolone-5-propanoate = trans-urocanate + H2O. Its pathway is amino-acid degradation; L-histidine degradation into L-glutamate; N-formimidoyl-L-glutamate from L-histidine: step 2/3. Its function is as follows. Catalyzes the conversion of urocanate to 4-imidazolone-5-propionate. The polypeptide is Urocanate hydratase (Caulobacter vibrioides (strain ATCC 19089 / CIP 103742 / CB 15) (Caulobacter crescentus)).